A 1110-amino-acid polypeptide reads, in one-letter code: Error-prone DNA polymerase (1110 aa).

The tract at residues 1072 to 1110 (LGELHEPLNDDRREHPDNPAQRIRHPRDVRILPPSRDFH) is disordered. 2 stretches are compositionally biased toward basic and acidic residues: residues 1073–1088 (GELHEPLNDDRREHPD) and 1097–1110 (PRDVRILPPSRDFH).

Belongs to the DNA polymerase type-C family. DnaE2 subfamily.

It is found in the cytoplasm. It catalyses the reaction DNA(n) + a 2'-deoxyribonucleoside 5'-triphosphate = DNA(n+1) + diphosphate. In terms of biological role, DNA polymerase involved in damage-induced mutagenesis and translesion synthesis (TLS). It is not the major replicative DNA polymerase. The protein is Error-prone DNA polymerase of Rhodopseudomonas palustris (strain BisB5).